A 376-amino-acid chain; its full sequence is Phosphoserine aminotransferase (376 aa).

Arg-46 lines the L-glutamate pocket. Pyridoxal 5'-phosphate contacts are provided by residues 80-81, Phe-104, Thr-150, Asp-172, and Gln-195; that span reads AT. Lys-196 is modified (N6-(pyridoxal phosphate)lysine). Position 247–248 (247–248) interacts with pyridoxal 5'-phosphate; sequence NT.

It belongs to the class-V pyridoxal-phosphate-dependent aminotransferase family. SerC subfamily. In terms of assembly, homodimer. Pyridoxal 5'-phosphate serves as cofactor.

It is found in the cytoplasm. It carries out the reaction O-phospho-L-serine + 2-oxoglutarate = 3-phosphooxypyruvate + L-glutamate. The enzyme catalyses 4-(phosphooxy)-L-threonine + 2-oxoglutarate = (R)-3-hydroxy-2-oxo-4-phosphooxybutanoate + L-glutamate. It functions in the pathway amino-acid biosynthesis; L-serine biosynthesis; L-serine from 3-phospho-D-glycerate: step 2/3. Its pathway is cofactor biosynthesis; pyridoxine 5'-phosphate biosynthesis; pyridoxine 5'-phosphate from D-erythrose 4-phosphate: step 3/5. Catalyzes the reversible conversion of 3-phosphohydroxypyruvate to phosphoserine and of 3-hydroxy-2-oxo-4-phosphonooxybutanoate to phosphohydroxythreonine. The sequence is that of Phosphoserine aminotransferase from Corynebacterium glutamicum (strain R).